A 1888-amino-acid polypeptide reads, in one-letter code: Nuclear pore membrane glycoprotein 210-like (1888 aa).

An N-terminal signal peptide occupies residues 1–35; that stretch reads MTGCPASSRRRGFGLFFFLRLHRLLLLFLVLRGTL. N84, N304, N348, N495, N522, N812, and N931 each carry an N-linked (GlcNAc...) asparagine glycan. Residues 1082–1154 form the BIG2 domain; it reads FPPFRLLPEK…TIQTVNEDTG (73 aa). N1445 carries N-linked (GlcNAc...) asparagine glycosylation. The helical transmembrane segment at 1813-1833 threads the bilayer; that stretch reads ILLLTLFAVLASTASIFLAYN. The N-linked (GlcNAc...) asparagine glycan is linked to N1859.

Belongs to the NUP210 family.

The protein localises to the nucleus membrane. The polypeptide is Nuclear pore membrane glycoprotein 210-like (NUP210L) (Homo sapiens (Human)).